A 449-amino-acid polypeptide reads, in one-letter code: Tubulin alpha-8 chain (449 aa).

The MREC motif motif lies at 1 to 4 (MREC). Positions 11, 71, 140, 144, 145, 179, 206, and 228 each coordinate GTP. Glu-71 serves as a coordination point for Mg(2+). Glu-254 is an active-site residue.

The protein belongs to the tubulin family. In terms of assembly, dimer of alpha and beta chains. A typical microtubule is a hollow water-filled tube with an outer diameter of 25 nm and an inner diameter of 15 nM. Alpha-beta heterodimers associate head-to-tail to form protofilaments running lengthwise along the microtubule wall with the beta-tubulin subunit facing the microtubule plus end conferring a structural polarity. Microtubules usually have 13 protofilaments but different protofilament numbers can be found in some organisms and specialized cells. Mg(2+) is required as a cofactor. Post-translationally, some glutamate residues at the C-terminus are polyglycylated, resulting in polyglycine chains on the gamma-carboxyl group. Glycylation is mainly limited to tubulin incorporated into axonemes (cilia and flagella) whereas glutamylation is prevalent in neuronal cells, centrioles, axonemes, and the mitotic spindle. Both modifications can coexist on the same protein on adjacent residues, and lowering polyglycylation levels increases polyglutamylation, and reciprocally. Cilia and flagella glycylation is required for their stability and maintenance. Flagella glycylation controls sperm motility. In terms of processing, some glutamate residues at the C-terminus are polyglutamylated, resulting in polyglutamate chains on the gamma-carboxyl group. Polyglutamylation plays a key role in microtubule severing by spastin (SPAST). SPAST preferentially recognizes and acts on microtubules decorated with short polyglutamate tails: severing activity by SPAST increases as the number of glutamates per tubulin rises from one to eight, but decreases beyond this glutamylation threshold. Glutamylation is also involved in cilia motility. The C-terminal phenylalanine residue is cleaved by MATCAP1/KIAA0895L. Expressed at highest levels in the testis, followed by skeletal and heart muscle. Expressed at low levels in the developing brain.

The protein localises to the cytoplasm. It localises to the cytoskeleton. It carries out the reaction GTP + H2O = GDP + phosphate + H(+). In terms of biological role, tubulin is the major constituent of microtubules, a cylinder consisting of laterally associated linear protofilaments composed of alpha- and beta-tubulin heterodimers. Microtubules grow by the addition of GTP-tubulin dimers to the microtubule end, where a stabilizing cap forms. Below the cap, tubulin dimers are in GDP-bound state, owing to GTPase activity of alpha-tubulin. The protein is Tubulin alpha-8 chain (Tuba8) of Mus musculus (Mouse).